A 261-amino-acid polypeptide reads, in one-letter code: Lysosome-associated membrane glycoprotein 5 (261 aa).

Residues 1-29 (MDLQGRAVPSVDRLRVLLMLFHTMAQIMA) form the signal peptide. Topologically, residues 30–234 (EQEVENLSGL…AVDEREQLEE (205 aa)) are extracellular. Residues N35, N53, and N126 are each glycosylated (N-linked (GlcNAc...) asparagine). The chain crosses the membrane as a helical span at residues 235–255 (TLPLILGLILGLVIVVTLAIY). At 256-261 (HVHPQK) the chain is on the cytoplasmic side.

It belongs to the LAMP family. In terms of processing, glycosylated.

Its subcellular location is the cytoplasmic vesicle membrane. The protein localises to the cell membrane. It is found in the cell projection. The protein resides in the dendrite. It localises to the cytoplasmic vesicle. Its subcellular location is the secretory vesicle. The protein localises to the synaptic vesicle membrane. It is found in the growth cone membrane. The protein resides in the early endosome membrane. It localises to the recycling endosome. Its subcellular location is the endoplasmic reticulum-Golgi intermediate compartment membrane. The protein localises to the endosome membrane. Its function is as follows. Plays a role in short-term synaptic plasticity in a subset of GABAergic neurons in the brain. The chain is Lysosome-associated membrane glycoprotein 5 (LAMP5) from Pongo abelii (Sumatran orangutan).